A 320-amino-acid polypeptide reads, in one-letter code: ADP-L-glycero-D-manno-heptose-6-epimerase (320 aa).

Residues 10 to 11 (FI), 31 to 32 (DN), K38, K53, 75 to 79 (LGACS), and N92 contribute to the NADP(+) site. The active-site Proton acceptor is Y139. An NADP(+)-binding site is contributed by K143. N168 contributes to the substrate binding site. NADP(+)-binding residues include V169 and K177. Catalysis depends on K177, which acts as the Proton acceptor. Substrate is bound by residues G179, H186, 200-203 (FEGS), R213, and Y277.

Belongs to the NAD(P)-dependent epimerase/dehydratase family. HldD subfamily. As to quaternary structure, homopentamer. NADP(+) is required as a cofactor.

It carries out the reaction ADP-D-glycero-beta-D-manno-heptose = ADP-L-glycero-beta-D-manno-heptose. The protein operates within nucleotide-sugar biosynthesis; ADP-L-glycero-beta-D-manno-heptose biosynthesis; ADP-L-glycero-beta-D-manno-heptose from D-glycero-beta-D-manno-heptose 7-phosphate: step 4/4. In terms of biological role, catalyzes the interconversion between ADP-D-glycero-beta-D-manno-heptose and ADP-L-glycero-beta-D-manno-heptose via an epimerization at carbon 6 of the heptose. The protein is ADP-L-glycero-D-manno-heptose-6-epimerase of Alkalilimnicola ehrlichii (strain ATCC BAA-1101 / DSM 17681 / MLHE-1).